We begin with the raw amino-acid sequence, 452 residues long: MSLAVVILAAGKGTRMKSALPKVLHAVAGKPMVQHVVDAAASLEPANTVIVYGHGGEQVKASVTGEQVAWAEQAEQLGTGHAVAQAMPYVKEDMVLVLYGDVPLIRPETLKDFVATVDDSTLALMTLTLDDPNGYGRIVRDGQNNVQRIVEQKDASEAELSIQEINTGILACSRRFLEESLPKLSSNNAQGEYYLTDLIAMASQSGLNVQTLQPNEGWEVDGVNDRVQLARLERIYQQAQAETLMRDGVTLLDPSRLDIRGRVQIASDVIIDVNVILEGDVTIEEGVVIGPNCILRDANIGAGTVIEANTLIDGAIVGEHCQLGPYARLRPGTELADKAKIGNFVETKKSYIGEGSKVNHLTYIGDSKIGKGVNVGAGTITCNYDGANKFQTVLKDGAFIGSNSSLVAPVTIGVNATVGAGSTITKDVGDNGLAVARTQQRNVANWQRPKKG.

The segment at 1 to 226 is pyrophosphorylase; it reads MSLAVVILAA…GWEVDGVNDR (226 aa). Residues 8-11, lysine 22, glutamine 73, 78-79, 99-101, glycine 136, glutamate 151, asparagine 166, and asparagine 224 each bind UDP-N-acetyl-alpha-D-glucosamine; these read LAAG, GT, and YGD. Aspartate 101 is a binding site for Mg(2+). Residue asparagine 224 coordinates Mg(2+). The interval 227-247 is linker; sequence VQLARLERIYQQAQAETLMRD. The interval 248–452 is N-acetyltransferase; that stretch reads GVTLLDPSRL…VANWQRPKKG (205 aa). Positions 330 and 348 each coordinate UDP-N-acetyl-alpha-D-glucosamine. The active-site Proton acceptor is the histidine 360. Positions 363 and 374 each coordinate UDP-N-acetyl-alpha-D-glucosamine. Acetyl-CoA is bound by residues alanine 377, 383 to 384, serine 402, alanine 420, and arginine 437; that span reads NY.

It in the N-terminal section; belongs to the N-acetylglucosamine-1-phosphate uridyltransferase family. The protein in the C-terminal section; belongs to the transferase hexapeptide repeat family. Homotrimer. Mg(2+) is required as a cofactor.

Its subcellular location is the cytoplasm. It carries out the reaction alpha-D-glucosamine 1-phosphate + acetyl-CoA = N-acetyl-alpha-D-glucosamine 1-phosphate + CoA + H(+). It catalyses the reaction N-acetyl-alpha-D-glucosamine 1-phosphate + UTP + H(+) = UDP-N-acetyl-alpha-D-glucosamine + diphosphate. It functions in the pathway nucleotide-sugar biosynthesis; UDP-N-acetyl-alpha-D-glucosamine biosynthesis; N-acetyl-alpha-D-glucosamine 1-phosphate from alpha-D-glucosamine 6-phosphate (route II): step 2/2. Its pathway is nucleotide-sugar biosynthesis; UDP-N-acetyl-alpha-D-glucosamine biosynthesis; UDP-N-acetyl-alpha-D-glucosamine from N-acetyl-alpha-D-glucosamine 1-phosphate: step 1/1. It participates in bacterial outer membrane biogenesis; LPS lipid A biosynthesis. Its function is as follows. Catalyzes the last two sequential reactions in the de novo biosynthetic pathway for UDP-N-acetylglucosamine (UDP-GlcNAc). The C-terminal domain catalyzes the transfer of acetyl group from acetyl coenzyme A to glucosamine-1-phosphate (GlcN-1-P) to produce N-acetylglucosamine-1-phosphate (GlcNAc-1-P), which is converted into UDP-GlcNAc by the transfer of uridine 5-monophosphate (from uridine 5-triphosphate), a reaction catalyzed by the N-terminal domain. This is Bifunctional protein GlmU from Alcanivorax borkumensis (strain ATCC 700651 / DSM 11573 / NCIMB 13689 / SK2).